Consider the following 309-residue polypeptide: Ribonuclease Z (309 aa).

Zn(2+) is bound by residues His63, His65, Asp67, His68, His145, Asp216, and His274. Asp67 functions as the Proton acceptor in the catalytic mechanism.

The protein belongs to the RNase Z family. As to quaternary structure, homodimer. The cofactor is Zn(2+).

It carries out the reaction Endonucleolytic cleavage of RNA, removing extra 3' nucleotides from tRNA precursor, generating 3' termini of tRNAs. A 3'-hydroxy group is left at the tRNA terminus and a 5'-phosphoryl group is left at the trailer molecule.. Zinc phosphodiesterase, which displays some tRNA 3'-processing endonuclease activity. Probably involved in tRNA maturation, by removing a 3'-trailer from precursor tRNA. In Streptococcus agalactiae serotype V (strain ATCC BAA-611 / 2603 V/R), this protein is Ribonuclease Z.